Here is a 433-residue protein sequence, read N- to C-terminus: NADH-ubiquinone oxidoreductase chain 4 (433 aa).

The next 13 membrane-spanning stretches (helical) occupy residues 10 to 30, 45 to 65, 80 to 100, 101 to 121, 132 to 152, 169 to 189, 203 to 223, 234 to 254, 261 to 281, 286 to 306, 331 to 353, 366 to 386, and 410 to 430; these read LFFLINPYQIMIYLMIMTLFL, FFFFDLMSLSMVILTVWISIL, IFNFYLLLMMNLLFICFMLEN, LLMFYLFFEAVLFPIILMISG, GFYMLMYTVFGSLPLLILMLL, MGFIFFLMILGFLVKIPMFLF, AGSMILAGVLLKLGFYGLYRF, FSFVLIVISMWGAVLISIFCL, SLIAYSSVSHMGITLAGCVTF, SFGMLMMMIGHGLCSSGLFCL, LSMWWFLFSIINMSAPMTMNLFG, LLLSLPVMMMIFLSACYSMFM, and YLMLLHIIPMIMWFLKINFFM.

This sequence belongs to the complex I subunit 4 family.

Its subcellular location is the mitochondrion membrane. It catalyses the reaction a ubiquinone + NADH + 5 H(+)(in) = a ubiquinol + NAD(+) + 4 H(+)(out). Core subunit of the mitochondrial membrane respiratory chain NADH dehydrogenase (Complex I) that is believed to belong to the minimal assembly required for catalysis. Complex I functions in the transfer of electrons from NADH to the respiratory chain. The immediate electron acceptor for the enzyme is believed to be ubiquinone. This Rhipicephalus sanguineus (Brown dog tick) protein is NADH-ubiquinone oxidoreductase chain 4 (ND4).